Consider the following 253-residue polypeptide: FGFR1 oncogene partner 2 (253 aa).

Residues 5 to 104 (IEKALADAKA…SALELIMSKY (100 aa)) adopt a coiled-coil conformation. S141 is subject to Phosphoserine. Positions 160 to 223 (LERRHLEANQ…LREILQITRE (64 aa)) form a coiled coil. A disordered region spans residues 231–253 (DDASESTSLSALVTNSDLSLRKS). Residues 235–253 (ESTSLSALVTNSDLSLRKS) show a composition bias toward polar residues.

It belongs to the SIKE family. As to expression, expressed in bone marrow, spleen and thymus.

It is found in the cytoplasm. May be involved in wound healing pathway. The sequence is that of FGFR1 oncogene partner 2 (FGFR1OP2) from Homo sapiens (Human).